The primary structure comprises 177 residues: MAVMTGANTAGVDKEVATQALNAELQDKGFLLTSTEDIINWARTGSLHWMTFGLACCAVEMMHTSMPRYDAERFGIAPRASPRQSDVMIVAGTLTNKMAPALRKVYDQMPEPRYVISMGSCANGGGYYHYSYSVVRGCDRIVPVDIYVPGCPPTAEALLYGLLQLQRKIRRTGTIVR.

Positions 56, 57, 121, and 151 each coordinate [4Fe-4S] cluster.

The protein belongs to the complex I 20 kDa subunit family. As to quaternary structure, NDH-1 is composed of 14 different subunits. Subunits NuoB, C, D, E, F, and G constitute the peripheral sector of the complex. [4Fe-4S] cluster serves as cofactor.

It localises to the cell inner membrane. The enzyme catalyses a quinone + NADH + 5 H(+)(in) = a quinol + NAD(+) + 4 H(+)(out). Its function is as follows. NDH-1 shuttles electrons from NADH, via FMN and iron-sulfur (Fe-S) centers, to quinones in the respiratory chain. Couples the redox reaction to proton translocation (for every two electrons transferred, four hydrogen ions are translocated across the cytoplasmic membrane), and thus conserves the redox energy in a proton gradient. This is NADH-quinone oxidoreductase subunit B from Ruegeria pomeroyi (strain ATCC 700808 / DSM 15171 / DSS-3) (Silicibacter pomeroyi).